Here is a 424-residue protein sequence, read N- to C-terminus: CinA-like protein (424 aa).

This sequence belongs to the CinA family.

This chain is CinA-like protein, found in Prochlorococcus marinus (strain MIT 9215).